Consider the following 524-residue polypeptide: Germ cell-less protein-like 1 (524 aa).

Residues 1–37 (MGALSSRVLRPAGRTEQPEPTPGAGGAARRSDAGEDA) are disordered. The short motif at 47–53 (GRKRKRS) is the Nuclear localization signal element. Positions 63-83 (DSETDDDEDEGDEQQRLLNTP) are disordered. A Phosphoserine modification is found at serine 64. Acidic residues predominate over residues 65-74 (ETDDDEDEGD). Threonine 66 is modified (phosphothreonine). The short motif at 83 to 89 (PRRKKLK) is the Nuclear localization signal element. One can recognise a BTB domain in the interval 106-176 (SDIKICALGE…LYRDDVLIKP (71 aa)).

As to quaternary structure, interacts with TMPO-Beta, TSG101 and TFDP2. Interacts with EMD. As to expression, ubiquitously expressed at low levels throughout development and in adult tissues.

It localises to the nucleus matrix. Its function is as follows. Possible function in spermatogenesis. Enhances the degradation of MDM2 and increases the amount of p53 probably by modulating the nucleocytoplasmic transport. The chain is Germ cell-less protein-like 1 (Gmcl1) from Mus musculus (Mouse).